The chain runs to 209 residues: Ion-translocating oxidoreductase complex subunit G (209 aa).

A helical membrane pass occupies residues 9-29; that stretch reads GLILAVFACVSTGLVALTYAL. FMN phosphoryl threonine is present on threonine 175.

The protein belongs to the RnfG family. The complex is composed of six subunits: RnfA, RnfB, RnfC, RnfD, RnfE and RnfG. The cofactor is FMN.

The protein resides in the cell inner membrane. Functionally, part of a membrane-bound complex that couples electron transfer with translocation of ions across the membrane. In Vibrio cholerae serotype O1 (strain ATCC 39315 / El Tor Inaba N16961), this protein is Ion-translocating oxidoreductase complex subunit G.